The chain runs to 147 residues: Lysozyme C-3 (147 aa).

An N-terminal signal peptide occupies residues 1-18 (MKALIILGFLFLSVAVQG). Residues 19–147 (KVFERCELAR…VSSYVQGCTL (129 aa)) form the C-type lysozyme domain. Intrachain disulfides connect cysteine 24/cysteine 145, cysteine 48/cysteine 133, cysteine 83/cysteine 99, and cysteine 95/cysteine 113. Active-site residues include glutamate 53 and aspartate 71.

Belongs to the glycosyl hydrolase 22 family. In terms of assembly, monomer. As to expression, stomach-specific.

It catalyses the reaction Hydrolysis of (1-&gt;4)-beta-linkages between N-acetylmuramic acid and N-acetyl-D-glucosamine residues in a peptidoglycan and between N-acetyl-D-glucosamine residues in chitodextrins.. Functionally, lysozymes have primarily a bacteriolytic function; those in tissues and body fluids are associated with the monocyte-macrophage system and enhance the activity of immunoagents. This chain is Lysozyme C-3 (LYZ3), found in Bos taurus (Bovine).